The sequence spans 488 residues: 5'-3' exonuclease PLD3 (488 aa).

Over 1 to 38 (MKPKLMYQELKVPVEEPAGELPMNEIEAWKAAEKKARW) the chain is Cytoplasmic. A helical; Signal-anchor for type II membrane protein transmembrane segment spans residues 39–59 (VLLVLILAVVGFGALMTQLFL). Topologically, residues 60–488 (WEYGDLHLFG…DSVGNACRLL (429 aa)) are lumenal. Cystine bridges form between Cys77–Cys237 and Cys81–Cys235. 2 N-linked (GlcNAc...) asparagine glycosylation sites follow: Asn97 and Asn132. Positions 194-221 (THGVLHTKFWVVDQTHFYLGSANMDWRS) constitute a PLD phosphodiesterase 1 domain. Residues His199, Lys201, and Asp206 contribute to the active site. Residue His199 is the Proton donor of the active site. Positions 199 and 201 each coordinate phosphate. Position 216 (Asn216) interacts with phosphate. 3 N-linked (GlcNAc...) asparagine glycosylation sites follow: Asn234, Asn282, and Asn385. Cys364 and Cys485 are oxidised to a cystine. A PLD phosphodiesterase 2 domain is found at 409–435 (YARVNHNKYMVTERTTYIGTSNWSGSY). His414 is a binding site for phosphate. Catalysis depends on His414, which acts as the Nucleophile. Position 436 (Phe436) interacts with Mg(2+).

Belongs to the phospholipase D family. As to quaternary structure, homodimer. Interacts with APP. N-glycosylated. In terms of processing, proteolytically processed to a soluble form that is stable within endosomes and lysosomes. During transport through the secretory pathway becomes proteolysed by cysteine proteases, thereby releasing a stable soluble lysosomal lumenal polypeptide, whereas the transmembrane-bound fragment is rapidly degraded. Its transport route to lysosomes involves ubiquitination and the ESCRT complex. Post-translationally, ubiquitinated. Ubiquitination mediates sorting into lysosomes.

It is found in the endoplasmic reticulum membrane. It localises to the lysosome lumen. The protein localises to the early endosome membrane. The protein resides in the late endosome membrane. Its subcellular location is the golgi apparatus membrane. It is found in the endosome membrane. It carries out the reaction Exonucleolytic cleavage in the 5'- to 3'-direction to yield nucleoside 3'-phosphates.. The enzyme catalyses a 5'-end 5'-dephospho-ribonucleotidyl-ribonucleotide-RNA + H2O = a ribonucleoside 3'-phosphate + a 5'-end dephospho-ribonucleoside-RNA + H(+). It catalyses the reaction a ribonucleoside 3'-phosphate-2'-3'-cyclophospho-GMP + H2O = a ribonucleoside 3'-phosphate + 2',3'-cyclophospho-GMP + H(+). The catalysed reaction is a 5'-end 5'-dephospho-2'-deoxyribonucleotidyl-2'-deoxyribonucleotide in single-stranded DNA + H2O = a 5'-end dephospho-2'-deoxyribonucleoside in single-stranded DNA + a 2'-deoxyribonucleoside 3'-phosphate + H(+). It carries out the reaction a 5'-end 5'-phospho-2'-deoxyribonucleotide in single-stranded DNA + H2O = a 5'-end 5'-dephospho-2'-deoxyribonucleotide in single-stranded DNA + phosphate. The enzyme catalyses a 3-lyso-sn-glycero-1-phospho-(3'-acyl-1'-sn-glycerol) + a 1-acyl-sn-glycerol = a 3-acyl-sn-glycero-1-phospho-(3'-acyl-1'-sn-glycerol) + glycerol. It catalyses the reaction 3-lyso-sn-glycero-1-phospho-(3'-(9Z-octadecenoyl)-1'-sn-glycerol) + 1-(9Z-octadecenoyl)-sn-glycerol = 3-(9Z-octadecenoyl)-sn-glycero-1-phospho-(3'-(9Z-octadecenoyl)-1'-sn-glycerol) + glycerol. Its function is as follows. 5'-&gt;3' exonuclease that hydrolyzes the phosphodiester bond of single-stranded DNA (ssDNA) and RNA molecules to form nucleoside 3'-monophosphates and 5'-end 5'-hydroxy deoxyribonucleotide/ribonucleotide fragments. Partially redundant with PLD4, can cleave all four nucleotides displaying higher efficiency for ssDNA and RNA fragments initiated with uridine and guanosine residues and lower efficiency for cytidine-initiated substrates. As a result, it does not always degrade polynucleotides to the single nucleotide level, it can stall at specific sites sparing certain fragments from exonucleolytic degradation. Processes self and pathogenic ssDNA and RNA molecules that reach the endolysosomal compartment via phagocytosis or autophagy and may serve as 'danger' signals for recognition by innate immune receptors such as toll-like receptors (TLRs). Degrades mitochondrial CpG-rich ssDNA fragments to prevent TLR9 activation and autoinflammatory response, but it can cleave viral RNA to generate ligands for TLR7 activation and initiate antiviral immune responses. In plasmacytoid dendritic cells, it cooperates with endonuclease RNASET2 to release 2',3'-cyclic guanosine monophosphate (2',3'-cGMP), a potent stimulatory ligand for TLR7. Produces 2',3'-cGMPs and cytidine-rich RNA fragments that occupy TLR7 ligand-binding pockets and trigger a signaling-competent state. Can exert polynucleotide phosphatase activity toward 5'-phosphorylated ssDNA substrates although at a slow rate. Transphosphatidylase that catalyzes the exchange with R to S stereo-inversion of the glycerol moiety between (S,R)-lysophosphatidylglycerol (LPG) and monoacylglycerol (MAG) substrates to yield (S,S)-bis(monoacylglycero)phosphate (BMP). Can synthesize a variety of (S,S)-BMPs representing the main phospholipid constituent of lysosomal intralumenal vesicle (ILV) membranes that bind acid hydrolases for lipid degradation. Regulates the homeostasis and interorganellar communication of the endolysosomal system with an overall impact on cellular removal of dysfunctional organelles via autophagy as well as proper protein and lipid turnover. May play a role in myotube formation in response to ER stress. This Rattus norvegicus (Rat) protein is 5'-3' exonuclease PLD3 (Pld3).